Reading from the N-terminus, the 392-residue chain is Phosphopentomutase (392 aa).

6 residues coordinate Mn(2+): aspartate 10, aspartate 282, histidine 287, aspartate 323, histidine 324, and histidine 335.

Belongs to the phosphopentomutase family. Requires Mn(2+) as cofactor.

It is found in the cytoplasm. It carries out the reaction 2-deoxy-alpha-D-ribose 1-phosphate = 2-deoxy-D-ribose 5-phosphate. The enzyme catalyses alpha-D-ribose 1-phosphate = D-ribose 5-phosphate. It functions in the pathway carbohydrate degradation; 2-deoxy-D-ribose 1-phosphate degradation; D-glyceraldehyde 3-phosphate and acetaldehyde from 2-deoxy-alpha-D-ribose 1-phosphate: step 1/2. Isomerase that catalyzes the conversion of deoxy-ribose 1-phosphate (dRib-1-P) and ribose 1-phosphate (Rib-1-P) to deoxy-ribose 5-phosphate (dRib-5-P) and ribose 5-phosphate (Rib-5-P), respectively. In Dictyoglomus thermophilum (strain ATCC 35947 / DSM 3960 / H-6-12), this protein is Phosphopentomutase.